A 476-amino-acid polypeptide reads, in one-letter code: MLGYEVVIGFETHAQLSTQSKIFSRAATAFGAEPNTQACAVDLALPGTLPVMNRGAVERAIQFALAIGAQVSPRSIFARKNYFYPDLPKGYQISQFEIPVVVGGEVEFYLDGEKRSVRLVRAHLEEDAGKSLHEDYVGQTGIDLNRAGTPLLEIVTEPDMRSSLEAVAYAKELHKIVTWIGICDGNMQEGSFRCDANVSVRKPGAPLGTRREVKNLNSFKFMQQAIDYEVRWQIEQLEDGHAIEQATVLFDPDSGETRSMRSKEDAADYRYFPDPDLPPLVIADDWVQRVRAEMTELPRVMAQRFVADYGLSDYDATALTQSHAIAAYFQAAAKACGQAKLASNWIMGDVARRLNTDEIDIAQSPVNAAQLGLLITRIVDGTLSNNAAKQVLDALWAGESPDVDAVIESKGLKQMNDSGALEKIVDDVLAANPKNIEQYKAGNSKALNALVGQIMKGSQGKANPQQVNDLLRKKLD.

This sequence belongs to the GatB/GatE family. GatB subfamily. Heterotrimer of A, B and C subunits.

It catalyses the reaction L-glutamyl-tRNA(Gln) + L-glutamine + ATP + H2O = L-glutaminyl-tRNA(Gln) + L-glutamate + ADP + phosphate + H(+). The enzyme catalyses L-aspartyl-tRNA(Asn) + L-glutamine + ATP + H2O = L-asparaginyl-tRNA(Asn) + L-glutamate + ADP + phosphate + 2 H(+). In terms of biological role, allows the formation of correctly charged Asn-tRNA(Asn) or Gln-tRNA(Gln) through the transamidation of misacylated Asp-tRNA(Asn) or Glu-tRNA(Gln) in organisms which lack either or both of asparaginyl-tRNA or glutaminyl-tRNA synthetases. The reaction takes place in the presence of glutamine and ATP through an activated phospho-Asp-tRNA(Asn) or phospho-Glu-tRNA(Gln). This chain is Aspartyl/glutamyl-tRNA(Asn/Gln) amidotransferase subunit B, found in Albidiferax ferrireducens (strain ATCC BAA-621 / DSM 15236 / T118) (Rhodoferax ferrireducens).